The primary structure comprises 295 residues: Protoheme IX farnesyltransferase (295 aa).

The next 9 membrane-spanning stretches (helical) occupy residues 8–28 (VTKP…FLLA), 35–55 (YPLF…GCVF), 74–94 (VLVK…LLGI), 106–125 (PLAM…VYSL), 132–152 (VYGT…GYCA), 162–182 (LILL…IAIF), 208–228 (ITLY…GGYA), 233–253 (LVVA…GYKA), and 264–284 (FVFS…DFMV).

Belongs to the UbiA prenyltransferase family. Protoheme IX farnesyltransferase subfamily.

It localises to the cell inner membrane. It carries out the reaction heme b + (2E,6E)-farnesyl diphosphate + H2O = Fe(II)-heme o + diphosphate. It participates in porphyrin-containing compound metabolism; heme O biosynthesis; heme O from protoheme: step 1/1. In terms of biological role, converts heme B (protoheme IX) to heme O by substitution of the vinyl group on carbon 2 of heme B porphyrin ring with a hydroxyethyl farnesyl side group. This chain is Protoheme IX farnesyltransferase, found in Cronobacter sakazakii (strain ATCC BAA-894) (Enterobacter sakazakii).